Here is a 238-residue protein sequence, read N- to C-terminus: Purine nucleoside phosphorylase DeoD-type (238 aa).

His-4 provides a ligand contact to a purine D-ribonucleoside. Phosphate-binding positions include Gly-20, Arg-24, Arg-43, and 87-90 (RVGS). A purine D-ribonucleoside is bound by residues 179–181 (EME) and 203–204 (SD). The active-site Proton donor is the Asp-204.

The protein belongs to the PNP/UDP phosphorylase family. As to quaternary structure, homohexamer; trimer of homodimers.

It catalyses the reaction a purine D-ribonucleoside + phosphate = a purine nucleobase + alpha-D-ribose 1-phosphate. It carries out the reaction a purine 2'-deoxy-D-ribonucleoside + phosphate = a purine nucleobase + 2-deoxy-alpha-D-ribose 1-phosphate. Functionally, catalyzes the reversible phosphorolytic breakdown of the N-glycosidic bond in the beta-(deoxy)ribonucleoside molecules, with the formation of the corresponding free purine bases and pentose-1-phosphate. The protein is Purine nucleoside phosphorylase DeoD-type of Histophilus somni (strain 129Pt) (Haemophilus somnus).